The sequence spans 73 residues: Putative beta-defensin 108A (73 aa).

The first 22 residues, 1 to 22 (MRIAVLFFTIFFFMSQVLPAKG), serve as a signal peptide directing secretion. Intrachain disulfides connect cysteine 28–cysteine 55, cysteine 35–cysteine 49, and cysteine 39–cysteine 56.

Belongs to the beta-defensin family.

Its subcellular location is the secreted. Functionally, has antibacterial activity. In Homo sapiens (Human), this protein is Putative beta-defensin 108A.